Here is a 503-residue protein sequence, read N- to C-terminus: Mitogen-activated protein kinase kinae mkk2 (503 aa).

The segment at 1–130 (MSSSPVPLLR…ASGPASASSS (130 aa)) is disordered. Residues 53 to 66 (APQPQRPSTRPAPP) are compositionally biased toward pro residues. The segment covering 100-115 (TGLNESTGHSRSSSFT) has biased composition (polar residues). The segment covering 121–130 (ASGPASASSS) has biased composition (low complexity). Residues 211–481 (IIELGSLGEG…PWRMLEHPWM (271 aa)) enclose the Protein kinase domain. ATP contacts are provided by residues 217 to 225 (LGEGAGGAV) and Lys240. Asp338 acts as the Proton acceptor in catalysis.

Belongs to the protein kinase superfamily. STE Ser/Thr protein kinase family. MAP kinase kinase subfamily.

It carries out the reaction L-seryl-[protein] + ATP = O-phospho-L-seryl-[protein] + ADP + H(+). It catalyses the reaction L-threonyl-[protein] + ATP = O-phospho-L-threonyl-[protein] + ADP + H(+). Mitogen-activated kinase kinase (MAPKK), part of the cell wall integrity (CWI) signaling pathway composed by three protein kinases bck1, mkk2 and mpkA and responsible for the maintaining of cell-wall integrity balance. The CWI pathway also regulates the oxidative stress response, as well as the production of some secondary metabolites including pyomelanin. This is Mitogen-activated protein kinase kinae mkk2 from Aspergillus fumigatus (strain CBS 144.89 / FGSC A1163 / CEA10) (Neosartorya fumigata).